Consider the following 269-residue polypeptide: Protein MGF 360-15R (269 aa).

This sequence belongs to the asfivirus MGF 360 family.

Its function is as follows. Plays a role in virus cell tropism, and may be required for efficient virus replication in macrophages. This is Protein MGF 360-15R from African swine fever virus (isolate Pig/Kenya/KEN-50/1950) (ASFV).